Reading from the N-terminus, the 124-residue chain is UPF0231 protein Shewmr4_0656 (124 aa).

This sequence belongs to the UPF0231 family.

This chain is UPF0231 protein Shewmr4_0656, found in Shewanella sp. (strain MR-4).